A 126-amino-acid chain; its full sequence is Aspartate 1-decarboxylase (126 aa).

Ser25 serves as the catalytic Schiff-base intermediate with substrate; via pyruvic acid. A Pyruvic acid (Ser) modification is found at Ser25. Position 57 (Thr57) interacts with substrate. Tyr58 serves as the catalytic Proton donor. Substrate is bound at residue 73 to 75; sequence GGA.

This sequence belongs to the PanD family. Heterooctamer of four alpha and four beta subunits. The cofactor is pyruvate. Post-translationally, is synthesized initially as an inactive proenzyme, which is activated by self-cleavage at a specific serine bond to produce a beta-subunit with a hydroxyl group at its C-terminus and an alpha-subunit with a pyruvoyl group at its N-terminus.

The protein resides in the cytoplasm. The catalysed reaction is L-aspartate + H(+) = beta-alanine + CO2. It functions in the pathway cofactor biosynthesis; (R)-pantothenate biosynthesis; beta-alanine from L-aspartate: step 1/1. Functionally, catalyzes the pyruvoyl-dependent decarboxylation of aspartate to produce beta-alanine. The sequence is that of Aspartate 1-decarboxylase from Xanthomonas campestris pv. campestris (strain ATCC 33913 / DSM 3586 / NCPPB 528 / LMG 568 / P 25).